We begin with the raw amino-acid sequence, 403 residues long: Casein kinase I isoform delta-A (403 aa).

The 269-residue stretch at 9 to 277 (YRLGRKIGSG…YLRQLFRNLF (269 aa)) folds into the Protein kinase domain. ATP contacts are provided by residues 15–23 (IGSGSFGDI) and Lys38. Asp128 acts as the Proton acceptor in catalysis. The tract at residues 315–340 (QGRIPLPRVMLPTSSGRPRGTQEVAP) is autoinhibitory. The segment at 322-403 (RVMLPTSSGR…PSGLQSAVPR (82 aa)) is disordered.

This sequence belongs to the protein kinase superfamily. Monomer. Interacts with per1 and per2. Component of the circadian core oscillator. Post-translationally, autophosphorylated on serine and threonine residues.

The protein resides in the cytoplasm. Its subcellular location is the nucleus. It carries out the reaction L-seryl-[protein] + ATP = O-phospho-L-seryl-[protein] + ADP + H(+). It catalyses the reaction L-threonyl-[protein] + ATP = O-phospho-L-threonyl-[protein] + ADP + H(+). Exhibits substrate-dependent heparin activation. Functionally, casein kinases are operationally defined by their preferential utilization of acidic proteins such as caseins as substrates. Central component of the circadian clock. May act as a negative regulator of circadian rhythmicity by phosphorylating per1 and per2, which may lead to their degradation. Participates in wnt signaling. The sequence is that of Casein kinase I isoform delta-A (csnk1da) from Danio rerio (Zebrafish).